The following is a 381-amino-acid chain: 1-deoxy-D-xylulose 5-phosphate reductoisomerase (381 aa).

NADPH is bound by residues T10, G11, S12, I13, N38, and N121. K122 contacts 1-deoxy-D-xylulose 5-phosphate. E123 contacts NADPH. D147 contacts Mn(2+). S148, E149, S173, and H196 together coordinate 1-deoxy-D-xylulose 5-phosphate. Position 149 (E149) interacts with Mn(2+). G202 is a binding site for NADPH. 1-deoxy-D-xylulose 5-phosphate-binding residues include S209, N214, K215, and E218. E218 contributes to the Mn(2+) binding site.

Belongs to the DXR family. Requires Mg(2+) as cofactor. Mn(2+) is required as a cofactor.

It carries out the reaction 2-C-methyl-D-erythritol 4-phosphate + NADP(+) = 1-deoxy-D-xylulose 5-phosphate + NADPH + H(+). It functions in the pathway isoprenoid biosynthesis; isopentenyl diphosphate biosynthesis via DXP pathway; isopentenyl diphosphate from 1-deoxy-D-xylulose 5-phosphate: step 1/6. In terms of biological role, catalyzes the NADPH-dependent rearrangement and reduction of 1-deoxy-D-xylulose-5-phosphate (DXP) to 2-C-methyl-D-erythritol 4-phosphate (MEP). The sequence is that of 1-deoxy-D-xylulose 5-phosphate reductoisomerase from Alkaliphilus oremlandii (strain OhILAs) (Clostridium oremlandii (strain OhILAs)).